The sequence spans 173 residues: Streptothricin acetyltransferase A (173 aa).

The 153-residue stretch at 21-173 (VVFGRMIPAF…EIAIFWYYKF (153 aa)) folds into the N-acetyltransferase domain.

The protein belongs to the acetyltransferase family. GNAT subfamily. In terms of assembly, homodimer.

It catalyses the reaction streptothricin D + acetyl-CoA = N(beta)-acetylstreptothricin D + CoA + H(+). The enzyme catalyses streptothricin F + acetyl-CoA = N(beta)-acetylstreptothricin F + CoA + H(+). Involved in resistance to streptothricin, a broad-spectrum antibiotic produced by streptomycetes. Detoxifies streptothricin via acetylation of the beta amino group of the first beta-lysyl moiety of streptothricin. The polypeptide is Streptothricin acetyltransferase A (Bacillus subtilis (strain 168)).